We begin with the raw amino-acid sequence, 551 residues long: MAEASFGSSSPVGSLSSEDHDFDPTAEMLVHDYDDERTLEEEELMDDGKNFSSEIEDLEKEGNMPLEDLLAFYGYESTIPAVANSSANSSPSELADELPDMTLDKEEIAKDLLSGDDEETQSSADDLTPSVTSHETSEFFPRPLRSNTTCDGDKESEIEDVETDSGNSPEDLRREIMIGLEYQAEIPPYLGEYNGDDEKAYENEDQLLWHPGVLLESKVKEYLVETSLRTGNEKVLDRISSGTHTRDNEQALYELLKCNHNIKEAIERYCCNGKASQEGMTAWTEEECRSFEHALMLHGKDFHLIQKDKVRSRTVAECVAFYYMWKKSERYDYFAQQTKFGKKRYNHHPGVTDYMDRLVDETESLGGTVSSSALTCNRPEPVPDQPLNILSSFTASDLTALTNSVATVCNPTAVNCLDDSFPPLANTPRGHVNHVPVVTEELLTLPSNGESDCFNLFETGFYHSELNPMCSEESERPAKRLKMGIAVPESFMNEVSVNNLGVDFENHTHHITSAKMAVSVADFGSLSANETNGFINAHSLHQHQHAALHSE.

Residues 1-16 (MAEASFGSSSPVGSLS) show a composition bias toward low complexity. Disordered regions lie at residues 1-62 (MAEA…EKEG) and 113-169 (LSGD…GNSP). The span at 17 to 36 (SEDHDFDPTAEMLVHDYDDE) shows a compositional bias: basic and acidic residues. 3 positions are modified to phosphoserine: Ser52, Ser53, and Ser114. Residues 121–134 (QSSADDLTPSVTSH) are compositionally biased toward polar residues. The span at 154-163 (KESEIEDVET) shows a compositional bias: acidic residues. The residue at position 156 (Ser156) is a Phosphoserine. Residue Thr163 is modified to Phosphothreonine. Residues Ser165 and Ser168 each carry the phosphoserine modification. Residues 174–273 (REIMIGLEYQ…EAIERYCCNG (100 aa)) enclose the ELM2 domain. Residues 278 to 330 (EGMTAWTEEECRSFEHALMLHGKDFHLIQKDKVRSRTVAECVAFYYMWKKSER) enclose the SANT domain.

It is found in the nucleus. Transcriptional repressor. This Mus musculus (Mouse) protein is Mesoderm induction early response protein 3 (Mier3).